The sequence spans 459 residues: Bifunctional protein GlmU (459 aa).

The tract at residues 1–229 is pyrophosphorylase; it reads MSNYAIILAA…FDESLGVNDR (229 aa). Residues 8–11, K22, Q72, and 77–78 each bind UDP-N-acetyl-alpha-D-glucosamine; these read LAAG and GT. D102 is a Mg(2+) binding site. UDP-N-acetyl-alpha-D-glucosamine contacts are provided by G139, E154, N169, and N227. N227 contributes to the Mg(2+) binding site. The linker stretch occupies residues 230 to 250; it reads VALATAEKVMRHRIARQHMVN. The N-acetyltransferase stretch occupies residues 251 to 459; it reads GVTVVNPDSA…NKKPHHPSQK (209 aa). R332 and K350 together coordinate UDP-N-acetyl-alpha-D-glucosamine. The active-site Proton acceptor is H362. 2 residues coordinate UDP-N-acetyl-alpha-D-glucosamine: Y365 and N376. Residues A379, 385 to 386, S404, A422, and R439 each bind acetyl-CoA; that span reads NY.

It in the N-terminal section; belongs to the N-acetylglucosamine-1-phosphate uridyltransferase family. The protein in the C-terminal section; belongs to the transferase hexapeptide repeat family. As to quaternary structure, homotrimer. It depends on Mg(2+) as a cofactor.

The protein resides in the cytoplasm. It catalyses the reaction alpha-D-glucosamine 1-phosphate + acetyl-CoA = N-acetyl-alpha-D-glucosamine 1-phosphate + CoA + H(+). The enzyme catalyses N-acetyl-alpha-D-glucosamine 1-phosphate + UTP + H(+) = UDP-N-acetyl-alpha-D-glucosamine + diphosphate. It participates in nucleotide-sugar biosynthesis; UDP-N-acetyl-alpha-D-glucosamine biosynthesis; N-acetyl-alpha-D-glucosamine 1-phosphate from alpha-D-glucosamine 6-phosphate (route II): step 2/2. It functions in the pathway nucleotide-sugar biosynthesis; UDP-N-acetyl-alpha-D-glucosamine biosynthesis; UDP-N-acetyl-alpha-D-glucosamine from N-acetyl-alpha-D-glucosamine 1-phosphate: step 1/1. The protein operates within bacterial outer membrane biogenesis; LPS lipid A biosynthesis. Catalyzes the last two sequential reactions in the de novo biosynthetic pathway for UDP-N-acetylglucosamine (UDP-GlcNAc). The C-terminal domain catalyzes the transfer of acetyl group from acetyl coenzyme A to glucosamine-1-phosphate (GlcN-1-P) to produce N-acetylglucosamine-1-phosphate (GlcNAc-1-P), which is converted into UDP-GlcNAc by the transfer of uridine 5-monophosphate (from uridine 5-triphosphate), a reaction catalyzed by the N-terminal domain. The polypeptide is Bifunctional protein GlmU (Streptococcus agalactiae serotype III (strain NEM316)).